We begin with the raw amino-acid sequence, 3931 residues long: Replicase polyprotein 1ab (3931 aa).

Residues cysteine 8–cysteine 28 form a C4-type; atypical zinc finger. The interval glutamate 69 to aspartate 182 is PCP1-alpha. Catalysis depends on for nsp1-alpha papain-like cysteine proteinase activity residues cysteine 76 and histidine 146. Residues valine 199–serine 200 are important for host EIF2AK2 inhibition. Catalysis depends on for nsp1-beta papain-like cysteine proteinase activity residues cysteine 270 and histidine 339. The OTU-like stretch occupies residues leucine 426–proline 513. The region spanning arginine 428 to valine 536 is the Peptidase C33 domain. Residues cysteine 437 and histidine 506 each act as for nsp2 cysteine proteinase activity in the active site. Disordered stretches follow at residues arginine 809–proline 868 and threonine 1118–valine 1164. The segment covering tryptophan 810–valine 819 has biased composition (pro residues). Basic and acidic residues predominate over residues proline 1139 to aspartate 1151. Helical transmembrane passes span serine 1221–cysteine 1241, glycine 1266–valine 1286, and tryptophan 1339–leucine 1359. The interval phenylalanine 1236–leucine 1359 is HD1. Residues threonine 1414–glutamine 1438 form a WCCH region. Transmembrane regions (helical) follow at residues isoleucine 1554–threonine 1574, leucine 1607–leucine 1627, glutamate 1629–cysteine 1649, alanine 1659–leucine 1679, and phenylalanine 1695–tryptophan 1715. The HD2 stretch occupies residues isoleucine 1554–tryptophan 1715. Residues histidine 1818, aspartate 1843, and serine 1897 each act as charge relay system; for serine protease nsp4 activity in the active site. 4 consecutive transmembrane segments (helical) span residues tryptophan 2006–valine 2026, phenylalanine 2030–isoleucine 2050, leucine 2064–glycine 2084, and serine 2107–phenylalanine 2127. The HD3 stretch occupies residues tryptophan 2006–phenylalanine 2127.

Belongs to the arteriviridae polyprotein family. As to quaternary structure, nsp1-alpha papain-like: Interacts with host RNF31. Interacts with host EIF2AK2; this interaction occurs in host stress granules and leads to EIF2AK2 inhibition. Interacts with host G3BP1; this interaction probably plays a role in Nsp1-beta-mediated inhibition of host EIF2AK2. In terms of assembly, interacts with host DDX18; this interaction redistributes host DDX18 to the cytoplasm. As to quaternary structure, interacts with host IFITM1. Interacts with host DDX5. In terms of assembly, interacts with host OTULIN. As to quaternary structure, interacts with host LGALS3. Specific enzymatic cleavages in vivo by its own proteases yield mature proteins. Nsp1 is autocleaved into two subunits, Nsp1-alpha and Nsp1-beta. There are two alternative pathways for processing. Either nsp4-5 is cleaved, which represents the major pathway or the nsp5-6 and nsp6-7 are processed, which represents the minor pathway. The major pathway occurs when nsp2 acts as a cofactor for nsp4.

It localises to the host nucleus. The protein localises to the host cytoplasm. The protein resides in the host membrane. Its subcellular location is the host endoplasmic reticulum. It is found in the host perinuclear region. The catalysed reaction is RNA(n) + a ribonucleoside 5'-triphosphate = RNA(n+1) + diphosphate. It carries out the reaction ATP + H2O = ADP + phosphate + H(+). It catalyses the reaction Thiol-dependent hydrolysis of ester, thioester, amide, peptide and isopeptide bonds formed by the C-terminal Gly of ubiquitin (a 76-residue protein attached to proteins as an intracellular targeting signal).. The enzyme catalyses uridylyl-uridylyl-ribonucleotide-RNA = a 3'-end uridylyl-2',3'-cyclophospho-uridine-RNA + a 5'-end dephospho-ribonucleoside-RNA. Contains the activities necessary for the transcription of negative stranded RNA, leader RNA, subgenomic mRNAs and progeny virion RNA as well as proteinases responsible for the cleavage of the polyprotein into functional products. Functionally, inhibits host IFN-beta production. Plays a role in the degradation of the host transcriptional activator CREBBP protein. The degradation of host CREBBP which is a key component of the IFN enhanceosome is likely responsible for the inhibition of interferon mediated by Nsp1-alpha. Also participates in the inhibition of host NF-kappa-B activation by counteracting LUBAC-dependent induction of NF-kappa-B. Reduces host NEMO ubiquitination by blocking the interaction between the two LUBAC complex components RNF31 and SHARPIN. Its function is as follows. Plays a role in blocking host mRNA nuclear export to the cytoplasm and subversion of host protein synthesis. Additionally, inhibits the interferon-activated JAK/STAT signal transduction by mediating the ubiquitination and subsequent proteasomal degradation of host KPNA1. Repurposes the host antiviral stress granules into a proviral platform to counteract the EIF2AK2/PKR restriction, thereby regulating the host inflammatory response. In terms of biological role, multifunctional protein that acts as a viral protease and as a viral antagonist of host immune response. Cleaves the nsp2/nsp3 site in the viral polyprotein. Displays deubiquitinating activity that cleaves both ubiquitinated and ISGylated products and therefore inhibits ubiquitin and ISG15-dependent host innate immunity. Also deubiquinates host NFKBIA, thereby interfering with NFKBIA degradation and impairing subsequent NF-kappa-B activation. Plays a role in the inhibition of the immune response by interacting with host IFITM1. This interaction leads to the proteasomal degradation of the IFN-induced antiviral protein IFITM1. Functionally, cleaves the majority of cleavage sites present in the C-terminus of the polyprotein. Triggers host apoptosis through caspase-3, -8, and -9 activations. Subverts host innate immune responses through its protease activity. Targets the NF-kappa-B essential modulator NEMO and mediates its cleavage. Blocks host interferon beta induction and downstream signaling by cleaving mitochondrial MAVS, dislodging it from the mitochondria. Impairs host defense by cleaving host mRNA-decapping enzyme DCP1A to attenuate its antiviral activity. Its function is as follows. Plays a role in the initial induction of autophagosomes from host endoplasmic reticulum. In terms of biological role, plays a role in the inhibition of host STAT3 signaling pathway by inducing the degradation of STAT3. Responsible for replication and transcription of the viral RNA genome. Functionally, displays RNA and DNA duplex-unwinding activities with 5' to 3' polarity. Its function is as follows. Plays a role in viral transcription/replication and prevents the simultaneous activation of host cell dsRNA sensors, such as MDA5/IFIH1, OAS, PKR and NLRP3 inflammasome. Acts by degrading the 5'-polyuridines generated during replication of the poly(A) region of viral genomic and subgenomic RNAs. Catalyzes a two-step reaction in which a 2'3'-cyclic phosphate (2'3'-cP) is first generated by 2'-O transesterification, which is then hydrolyzed to a 3'-phosphate (3'-P). If not degraded, poly(U) RNA would hybridize with poly(A) RNA tails and activate host dsRNA sensors. Also plays a role in the inhibition of host type I interferon production by recruiting host OTULIN to promote removal of linear ubiquitination targeting host NEMO. The chain is Replicase polyprotein 1ab from Porcine reproductive and respiratory syndrome virus (PRRSV).